Here is a 194-residue protein sequence, read N- to C-terminus: Peptidyl-tRNA hydrolase (194 aa).

Tyrosine 17 contributes to the tRNA binding site. Residue histidine 22 is the Proton acceptor of the active site. Positions 68, 70, and 116 each coordinate tRNA.

Belongs to the PTH family. Monomer.

The protein localises to the cytoplasm. The enzyme catalyses an N-acyl-L-alpha-aminoacyl-tRNA + H2O = an N-acyl-L-amino acid + a tRNA + H(+). Its function is as follows. Hydrolyzes ribosome-free peptidyl-tRNAs (with 1 or more amino acids incorporated), which drop off the ribosome during protein synthesis, or as a result of ribosome stalling. Functionally, catalyzes the release of premature peptidyl moieties from peptidyl-tRNA molecules trapped in stalled 50S ribosomal subunits, and thus maintains levels of free tRNAs and 50S ribosomes. In Actinobacillus pleuropneumoniae serotype 5b (strain L20), this protein is Peptidyl-tRNA hydrolase.